The primary structure comprises 266 residues: Tryptophan synthase alpha chain (266 aa).

Active-site proton acceptor residues include Glu52 and Asp63.

Belongs to the TrpA family. In terms of assembly, tetramer of two alpha and two beta chains.

The enzyme catalyses (1S,2R)-1-C-(indol-3-yl)glycerol 3-phosphate + L-serine = D-glyceraldehyde 3-phosphate + L-tryptophan + H2O. It participates in amino-acid biosynthesis; L-tryptophan biosynthesis; L-tryptophan from chorismate: step 5/5. Its function is as follows. The alpha subunit is responsible for the aldol cleavage of indoleglycerol phosphate to indole and glyceraldehyde 3-phosphate. The sequence is that of Tryptophan synthase alpha chain from Nocardia farcinica (strain IFM 10152).